Here is a 64-residue protein sequence, read N- to C-terminus: Cytochrome b-c1 complex subunit 9 (64 aa).

Residues 2–21 are Mitochondrial matrix-facing; sequence VAPTLTARLYSLLFRRTSTF. The chain crosses the membrane as a helical span at residues 22-47; it reads ALTIVVGALFFERAFDQGADAIYEHI. Residues 48–64 are Mitochondrial intermembrane-facing; sequence NEGKLWKHIKHKYENKE.

The protein belongs to the UQCR10/QCR9 family. As to quaternary structure, component of the ubiquinol-cytochrome c oxidoreductase (cytochrome b-c1 complex, complex III, CIII), a multisubunit enzyme composed of 11 subunits. The complex is composed of 3 respiratory subunits cytochrome b, cytochrome c1 and Rieske protein UQCRFS1, 2 core protein subunits UQCRC1/QCR1 and UQCRC2/QCR2, and 6 low-molecular weight protein subunits UQCRH/QCR6, UQCRB/QCR7, UQCRQ/QCR8, UQCR10/QCR9, UQCR11/QCR10 and subunit 9, the cleavage product of Rieske protein UQCRFS1. The complex exists as an obligatory dimer and forms supercomplexes (SCs) in the inner mitochondrial membrane with NADH-ubiquinone oxidoreductase (complex I, CI) and cytochrome c oxidase (complex IV, CIV), resulting in different assemblies (supercomplex SCI(1)III(2)IV(1) and megacomplex MCI(2)III(2)IV(2)). Interacts with STMP1.

The protein localises to the mitochondrion inner membrane. Functionally, component of the ubiquinol-cytochrome c oxidoreductase, a multisubunit transmembrane complex that is part of the mitochondrial electron transport chain which drives oxidative phosphorylation. The respiratory chain contains 3 multisubunit complexes succinate dehydrogenase (complex II, CII), ubiquinol-cytochrome c oxidoreductase (cytochrome b-c1 complex, complex III, CIII) and cytochrome c oxidase (complex IV, CIV), that cooperate to transfer electrons derived from NADH and succinate to molecular oxygen, creating an electrochemical gradient over the inner membrane that drives transmembrane transport and the ATP synthase. The cytochrome b-c1 complex catalyzes electron transfer from ubiquinol to cytochrome c, linking this redox reaction to translocation of protons across the mitochondrial inner membrane, with protons being carried across the membrane as hydrogens on the quinol. In the process called Q cycle, 2 protons are consumed from the matrix, 4 protons are released into the intermembrane space and 2 electrons are passed to cytochrome c. The sequence is that of Cytochrome b-c1 complex subunit 9 (UQCR10) from Bos taurus (Bovine).